Here is a 545-residue protein sequence, read N- to C-terminus: MAAKDVKFGDSARKKMLVGVNVLADAVKATLGPKGRNVVLAKSFGAPTITKDGVSVAKEIELKDAFENMGAQLVKEVASKANDAAGDGTTTATVLAQSIVNEGLKAVAAGMNPMDLKRGIDKATAAVVAELKNLSKPCADSKAIAQVGTISANSDSSIGEIIAEAMEKVGKEGVITVEEGSGLENELSVVEGMQFDRGYLSPYFVNKPDTMVAELEGPLLLLVDKKISTSRAAASTERASAGRPLLIVAEDVEGEALATLVVNNMRGIVKVAAVKAPGFGDRRKAMLQDIAVLTGGQVISEEIGVSLETATLEHLGNAKRVILSKENTTIIDGAGADTEIEARVKQIRAQIEETSSDYDREKLQERLAKLAGGVAVIKVGAGTEVEMKEKKARVEDALHATRAAVEEGVVPGGGVALVRALNAIVDLKGDNEDQNVGIALLRRAVESPLRQITANAGDEPSVVANKVKQGSGNFGYNAATGEYGDMIEMGILDPAKVTRSALQAAASIGGLMITTEAMIADAPSDAPAGGGMPDMGGMGGMGGMM.

Residues 30–33 (TLGP), Lys51, 87–91 (DGTTT), Gly413, 477–479 (NAA), and Asp493 contribute to the ATP site.

Belongs to the chaperonin (HSP60) family. In terms of assembly, forms a cylinder of 14 subunits composed of two heptameric rings stacked back-to-back. Interacts with the co-chaperonin GroES.

It localises to the cytoplasm. The catalysed reaction is ATP + H2O + a folded polypeptide = ADP + phosphate + an unfolded polypeptide.. Together with its co-chaperonin GroES, plays an essential role in assisting protein folding. The GroEL-GroES system forms a nano-cage that allows encapsulation of the non-native substrate proteins and provides a physical environment optimized to promote and accelerate protein folding. This chain is Chaperonin GroEL, found in Pseudomonas putida (Arthrobacter siderocapsulatus).